The sequence spans 309 residues: 4-hydroxy-3-methylbut-2-enyl diphosphate reductase (309 aa).

Residue Cys-13 coordinates [4Fe-4S] cluster. (2E)-4-hydroxy-3-methylbut-2-enyl diphosphate-binding residues include His-42 and His-75. 2 residues coordinate dimethylallyl diphosphate: His-42 and His-75. Isopentenyl diphosphate contacts are provided by His-42 and His-75. Cys-97 serves as a coordination point for [4Fe-4S] cluster. His-125 lines the (2E)-4-hydroxy-3-methylbut-2-enyl diphosphate pocket. His-125 contributes to the dimethylallyl diphosphate binding site. An isopentenyl diphosphate-binding site is contributed by His-125. The active-site Proton donor is Glu-127. Thr-165 serves as a coordination point for (2E)-4-hydroxy-3-methylbut-2-enyl diphosphate. Cys-195 provides a ligand contact to [4Fe-4S] cluster. Ser-223, Ser-224, Asn-225, and Ser-267 together coordinate (2E)-4-hydroxy-3-methylbut-2-enyl diphosphate. Ser-223, Ser-224, Asn-225, and Ser-267 together coordinate dimethylallyl diphosphate. Residues Ser-223, Ser-224, Asn-225, and Ser-267 each contribute to the isopentenyl diphosphate site.

It belongs to the IspH family. [4Fe-4S] cluster serves as cofactor.

It carries out the reaction isopentenyl diphosphate + 2 oxidized [2Fe-2S]-[ferredoxin] + H2O = (2E)-4-hydroxy-3-methylbut-2-enyl diphosphate + 2 reduced [2Fe-2S]-[ferredoxin] + 2 H(+). It catalyses the reaction dimethylallyl diphosphate + 2 oxidized [2Fe-2S]-[ferredoxin] + H2O = (2E)-4-hydroxy-3-methylbut-2-enyl diphosphate + 2 reduced [2Fe-2S]-[ferredoxin] + 2 H(+). It participates in isoprenoid biosynthesis; dimethylallyl diphosphate biosynthesis; dimethylallyl diphosphate from (2E)-4-hydroxy-3-methylbutenyl diphosphate: step 1/1. The protein operates within isoprenoid biosynthesis; isopentenyl diphosphate biosynthesis via DXP pathway; isopentenyl diphosphate from 1-deoxy-D-xylulose 5-phosphate: step 6/6. Its function is as follows. Catalyzes the conversion of 1-hydroxy-2-methyl-2-(E)-butenyl 4-diphosphate (HMBPP) into a mixture of isopentenyl diphosphate (IPP) and dimethylallyl diphosphate (DMAPP). Acts in the terminal step of the DOXP/MEP pathway for isoprenoid precursor biosynthesis. The sequence is that of 4-hydroxy-3-methylbut-2-enyl diphosphate reductase from Chlamydia felis (strain Fe/C-56) (Chlamydophila felis).